The sequence spans 179 residues: Large ribosomal subunit protein uL5 (179 aa).

This sequence belongs to the universal ribosomal protein uL5 family. As to quaternary structure, part of the 50S ribosomal subunit; part of the 5S rRNA/L5/L18/L25 subcomplex. Contacts the 5S rRNA and the P site tRNA. Forms a bridge to the 30S subunit in the 70S ribosome.

Its function is as follows. This is one of the proteins that bind and probably mediate the attachment of the 5S RNA into the large ribosomal subunit, where it forms part of the central protuberance. In the 70S ribosome it contacts protein S13 of the 30S subunit (bridge B1b), connecting the 2 subunits; this bridge is implicated in subunit movement. Contacts the P site tRNA; the 5S rRNA and some of its associated proteins might help stabilize positioning of ribosome-bound tRNAs. The sequence is that of Large ribosomal subunit protein uL5 from Alkaliphilus metalliredigens (strain QYMF).